A 251-amino-acid polypeptide reads, in one-letter code: Triosephosphate isomerase, glycosomal (251 aa).

Residues asparagine 12 and lysine 14 each contribute to the substrate site. Histidine 96 serves as the catalytic Electrophile. Residue glutamate 168 is the Proton acceptor of the active site.

This sequence belongs to the triosephosphate isomerase family. In terms of assembly, homodimer.

It is found in the glycosome. The enzyme catalyses D-glyceraldehyde 3-phosphate = dihydroxyacetone phosphate. Its pathway is carbohydrate biosynthesis; gluconeogenesis. It functions in the pathway carbohydrate degradation; glycolysis; D-glyceraldehyde 3-phosphate from glycerone phosphate: step 1/1. This chain is Triosephosphate isomerase, glycosomal, found in Trypanosoma cruzi.